The chain runs to 403 residues: Putative gustatory receptor 98b (403 aa).

Residues 1–11 (MVAQKSRLLAR) lie on the Cytoplasmic side of the membrane. A helical transmembrane segment spans residues 12-32 (AFPYLDIFSVFALTPPPQSFG). At 33-48 (HTPHRRLRWYLMTGYV) the chain is on the extracellular side. Residues 49-69 (FYATAILATVFIVSYFNIIAI) traverse the membrane as a helical segment. Residues 70–83 (DEEVLEYNVSDFTR) are Cytoplasmic-facing. A helical membrane pass occupies residues 84–104 (VMGNIQKSLYSIMAIANHLNM). Residues 105 to 144 (LINYRRLGGIYKDIADLEMDMDEASQCFGGQRQRFSFRFR) are Extracellular-facing. A helical transmembrane segment spans residues 145 to 165 (MALCVGVWMILMVGSMPRLTM). Residues 166–191 (TAMGPFVSTLLKILTEFVMIMQQLKS) are Cytoplasmic-facing. The chain crosses the membrane as a helical span at residues 192 to 212 (LEYCVFVLIIYELVLRLRRTL). The Extracellular segment spans residues 213 to 259 (SQLQEEFQDCEQQDMLQALCVALKRNQLLLGRIWRLEGDVGSYFTPT). A helical transmembrane segment spans residues 260 to 280 (MLLLFLYNGLTILHMVNWAYI). At 281–365 (NKFLYDSCCQ…LRFTCGGLFD (85 aa)) the chain is on the cytoplasmic side. Residues 366-386 (INLKYFGGLLVTIFGYIIILI) traverse the membrane as a helical segment. Residues 387–403 (QFKVQAIAANRYKKVVN) lie on the Extracellular side of the membrane.

The protein belongs to the insect chemoreceptor superfamily. Gustatory receptor (GR) family. Gr2a subfamily.

Its subcellular location is the cell membrane. Probable gustatory receptor which mediates acceptance or avoidance behavior, depending on its substrates. The sequence is that of Putative gustatory receptor 98b (Gr98b) from Drosophila melanogaster (Fruit fly).